A 160-amino-acid chain; its full sequence is S-ribosylhomocysteine lyase (160 aa).

Residues histidine 57, histidine 61, and cysteine 127 each contribute to the Fe cation site.

Belongs to the LuxS family. Homodimer. It depends on Fe cation as a cofactor.

The enzyme catalyses S-(5-deoxy-D-ribos-5-yl)-L-homocysteine = (S)-4,5-dihydroxypentane-2,3-dione + L-homocysteine. Involved in the synthesis of autoinducer 2 (AI-2) which is secreted by bacteria and is used to communicate both the cell density and the metabolic potential of the environment. The regulation of gene expression in response to changes in cell density is called quorum sensing. Catalyzes the transformation of S-ribosylhomocysteine (RHC) to homocysteine (HC) and 4,5-dihydroxy-2,3-pentadione (DPD). The polypeptide is S-ribosylhomocysteine lyase (Streptococcus pneumoniae (strain CGSP14)).